A 63-amino-acid polypeptide reads, in one-letter code: uncharacterized protein (63 aa).

The first 21 residues, 1 to 21 (MYLSLLLILLAWTLWLGNSLA), serve as a signal peptide directing secretion.

This is an uncharacterized protein from Haemophilus influenzae (strain ATCC 51907 / DSM 11121 / KW20 / Rd).